Consider the following 430-residue polypeptide: 3-oxo-tetronate kinase (430 aa).

Residues serine 268, 366 to 369 (GGET), and glycine 410 each bind ATP.

It belongs to the four-carbon acid sugar kinase family.

It carries out the reaction 3-dehydro-L-erythronate + ATP = 3-dehydro-4-O-phospho-L-erythronate + ADP + H(+). The catalysed reaction is 3-dehydro-D-erythronate + ATP = 3-dehydro-4-O-phospho-D-erythronate + ADP + H(+). In terms of biological role, catalyzes the ATP-dependent phosphorylation of 3-oxo-tetronate to 3-oxo-tetronate 4-phosphate. The sequence is that of 3-oxo-tetronate kinase from Pseudomonas fluorescens (strain ATCC BAA-477 / NRRL B-23932 / Pf-5).